A 226-amino-acid chain; its full sequence is Ribonuclease HII (226 aa).

One can recognise an RNase H type-2 domain in the interval 29 to 220 (GPVAGVDEAG…VAALLHRVDN (192 aa)). Residues aspartate 35, glutamate 36, and aspartate 129 each contribute to the a divalent metal cation site.

This sequence belongs to the RNase HII family. Mn(2+) is required as a cofactor. It depends on Mg(2+) as a cofactor.

The protein resides in the cytoplasm. It catalyses the reaction Endonucleolytic cleavage to 5'-phosphomonoester.. In terms of biological role, endonuclease that specifically degrades the RNA of RNA-DNA hybrids. The protein is Ribonuclease HII of Rhodococcus opacus (strain B4).